A 96-amino-acid polypeptide reads, in one-letter code: Co-chaperonin GroES (96 aa).

The protein belongs to the GroES chaperonin family. Heptamer of 7 subunits arranged in a ring. Interacts with the chaperonin GroEL.

The protein localises to the cytoplasm. Together with the chaperonin GroEL, plays an essential role in assisting protein folding. The GroEL-GroES system forms a nano-cage that allows encapsulation of the non-native substrate proteins and provides a physical environment optimized to promote and accelerate protein folding. GroES binds to the apical surface of the GroEL ring, thereby capping the opening of the GroEL channel. The chain is Co-chaperonin GroES from Geobacter sp. (strain M21).